A 285-amino-acid chain; its full sequence is Putative pyruvate, phosphate dikinase regulatory protein (285 aa).

G165–T172 contributes to the ADP binding site.

This sequence belongs to the pyruvate, phosphate/water dikinase regulatory protein family. PDRP subfamily.

The catalysed reaction is N(tele)-phospho-L-histidyl/L-threonyl-[pyruvate, phosphate dikinase] + ADP = N(tele)-phospho-L-histidyl/O-phospho-L-threonyl-[pyruvate, phosphate dikinase] + AMP + H(+). The enzyme catalyses N(tele)-phospho-L-histidyl/O-phospho-L-threonyl-[pyruvate, phosphate dikinase] + phosphate + H(+) = N(tele)-phospho-L-histidyl/L-threonyl-[pyruvate, phosphate dikinase] + diphosphate. Functionally, bifunctional serine/threonine kinase and phosphorylase involved in the regulation of the pyruvate, phosphate dikinase (PPDK) by catalyzing its phosphorylation/dephosphorylation. This Lactobacillus delbrueckii subsp. bulgaricus (strain ATCC 11842 / DSM 20081 / BCRC 10696 / JCM 1002 / NBRC 13953 / NCIMB 11778 / NCTC 12712 / WDCM 00102 / Lb 14) protein is Putative pyruvate, phosphate dikinase regulatory protein.